Here is a 321-residue protein sequence, read N- to C-terminus: Fe-S cluster assembly protein DRE2 (321 aa).

The segment at methionine 1–glutamate 140 is N-terminal SAM-like domain. Residues isoleucine 128–valine 138 show a composition bias toward polar residues. Positions isoleucine 128 to glutamine 166 are disordered. The tract at residues glutamate 140–glutamate 177 is linker. 4 residues coordinate [2Fe-2S] cluster: cysteine 202, cysteine 217, cysteine 220, and cysteine 222. Positions cysteine 202–cysteine 222 are fe-S binding site A. The tract at residues glutamine 239–asparagine 263 is disordered. [4Fe-4S] cluster-binding residues include cysteine 283, cysteine 286, cysteine 294, and cysteine 297. 2 short sequence motifs (cx2C motif) span residues cysteine 283–cysteine 286 and cysteine 294–cysteine 297. Residues cysteine 283 to cysteine 297 form a fe-S binding site B region.

It belongs to the anamorsin family. Monomer. Interacts with TAH18. Interacts with MIA40. [2Fe-2S] cluster is required as a cofactor. [4Fe-4S] cluster serves as cofactor.

It localises to the cytoplasm. Its subcellular location is the mitochondrion intermembrane space. Component of the cytosolic iron-sulfur (Fe-S) protein assembly (CIA) machinery required for the maturation of extramitochondrial Fe-S proteins. Part of an electron transfer chain functioning in an early step of cytosolic Fe-S biogenesis, facilitating the de novo assembly of a [4Fe-4S] cluster on the scaffold complex CFD1-NBP35. Electrons are transferred to DRE2 from NADPH via the FAD- and FMN-containing protein TAH18. TAH18-DRE2 are also required for the assembly of the diferric tyrosyl radical cofactor of ribonucleotide reductase (RNR), probably by providing electrons for reduction during radical cofactor maturation in the catalytic small subunit RNR2. The chain is Fe-S cluster assembly protein DRE2 from Malassezia globosa (strain ATCC MYA-4612 / CBS 7966) (Dandruff-associated fungus).